The sequence spans 490 residues: Membrane-bound lytic murein transglycosylase F (490 aa).

An N-terminal signal peptide occupies residues 1 to 32 (MFALTAYRLRCAAWLLATGIFLLLAGCSEAKA). Positions 33 to 269 (PTALERVQKE…RLKDRYYGHV (237 aa)) are non-LT domain. Positions 270-490 (DVLGYVGAYT…PDDDEGDGKL (221 aa)) are LT domain. Glutamate 316 is a catalytic residue. The tract at residues 467 to 490 (AESGLHLPGVNKTRPDDDEGDGKL) is disordered.

This sequence in the N-terminal section; belongs to the bacterial solute-binding protein 3 family. The protein in the C-terminal section; belongs to the transglycosylase Slt family.

The protein localises to the cell outer membrane. The catalysed reaction is Exolytic cleavage of the (1-&gt;4)-beta-glycosidic linkage between N-acetylmuramic acid (MurNAc) and N-acetylglucosamine (GlcNAc) residues in peptidoglycan, from either the reducing or the non-reducing ends of the peptidoglycan chains, with concomitant formation of a 1,6-anhydrobond in the MurNAc residue.. Its function is as follows. Murein-degrading enzyme that degrades murein glycan strands and insoluble, high-molecular weight murein sacculi, with the concomitant formation of a 1,6-anhydromuramoyl product. Lytic transglycosylases (LTs) play an integral role in the metabolism of the peptidoglycan (PG) sacculus. Their lytic action creates space within the PG sacculus to allow for its expansion as well as for the insertion of various structures such as secretion systems and flagella. The chain is Membrane-bound lytic murein transglycosylase F from Pseudomonas paraeruginosa (strain DSM 24068 / PA7) (Pseudomonas aeruginosa (strain PA7)).